The primary structure comprises 282 residues: Ribosome-inactivating protein bryodin II (282 aa).

An N-terminal signal peptide occupies residues 1 to 21; the sequence is MRSIGFYSVLALYVGAHVTED. Asn25 carries N-linked (GlcNAc...) asparagine glycosylation. The active site involves Glu183.

It belongs to the ribosome-inactivating protein family. Type 1 RIP subfamily.

The catalysed reaction is Endohydrolysis of the N-glycosidic bond at one specific adenosine on the 28S rRNA.. In terms of biological role, ribosome-inactivating protein of type 1, inhibits protein synthesis in animal cells. This Bryonia dioica (Red bryony) protein is Ribosome-inactivating protein bryodin II.